The sequence spans 272 residues: Tryptophan synthase alpha chain (272 aa).

Active-site proton acceptor residues include glutamate 49 and aspartate 60.

The protein belongs to the TrpA family. As to quaternary structure, tetramer of two alpha and two beta chains.

It carries out the reaction (1S,2R)-1-C-(indol-3-yl)glycerol 3-phosphate + L-serine = D-glyceraldehyde 3-phosphate + L-tryptophan + H2O. It functions in the pathway amino-acid biosynthesis; L-tryptophan biosynthesis; L-tryptophan from chorismate: step 5/5. The alpha subunit is responsible for the aldol cleavage of indoleglycerol phosphate to indole and glyceraldehyde 3-phosphate. This Hydrogenovibrio crunogenus (strain DSM 25203 / XCL-2) (Thiomicrospira crunogena) protein is Tryptophan synthase alpha chain.